Reading from the N-terminus, the 620-residue chain is Endoglucanase 10 (620 aa).

The tract at residues 1 to 26 is disordered; that stretch reads MFGRDPWGGPLEISNADSATDDDRSR. A helical; Signal-anchor for type II membrane protein transmembrane segment spans residues 72-92; it reads IFMWTVGTILGVGLFIGFVMM. The active-site Nucleophile is D165. Residues N216, N314, N323, N344, N408, and N425 are each glycosylated (N-linked (GlcNAc...) asparagine). Active-site residues include H513 and D561. N-linked (GlcNAc...) asparagine glycosylation occurs at N567. E570 is a catalytic residue.

It belongs to the glycosyl hydrolase 9 (cellulase E) family. Ubiquitous.

Its subcellular location is the membrane. It catalyses the reaction Endohydrolysis of (1-&gt;4)-beta-D-glucosidic linkages in cellulose, lichenin and cereal beta-D-glucans.. The polypeptide is Endoglucanase 10 (GLU2) (Oryza sativa subsp. japonica (Rice)).